The chain runs to 195 residues: Keratin-associated protein 4-11 (195 aa).

Tandem repeats lie at residues 5-9 (CCGSV), 24-28 (CCRPS), 29-33 (CCETT), 34-38 (CCRTT), 44-48 (CCVSS), 49-53 (CCRPQ), 54-58 (CCQSV), 59-63 (CCQPT), 64-68 (CCRPR), 69-73 (CCISS), 74-78 (CCRPS), 79-83 (CCVSS), 84-88 (CCKPQ), 89-93 (CCQSM), 94-98 (CCQPT), 99-103 (CCRPR), 104-108 (CCISS), 109-113 (CCRPS), 114-118 (CCVSS), 119-123 (CCRPQ), 124-128 (CCQSV), 129-133 (CCQPT), 134-138 (CCHPS), 144-148 (CCRPS), 149-153 (CCESS), 154-158 (CCRPC), and 159-163 (CCLRP). Residues 5–163 (CCGSVCSHQG…CCRPCCCLRP (159 aa)) are 27 X 5 AA repeats of C-C-[GIKRQVHEL]-[SPTR]-[STVQRMC].

The protein belongs to the KRTAP type 4 family. In terms of assembly, interacts with hair keratins. In terms of tissue distribution, expressed in the hair follicles.

In terms of biological role, in the hair cortex, hair keratin intermediate filaments are embedded in an interfilamentous matrix, consisting of hair keratin-associated proteins (KRTAP), which are essential for the formation of a rigid and resistant hair shaft through their extensive disulfide bond cross-linking with abundant cysteine residues of hair keratins. The matrix proteins include the high-sulfur and high-glycine-tyrosine keratins. This Homo sapiens (Human) protein is Keratin-associated protein 4-11 (KRTAP4-11).